The chain runs to 379 residues: Succinate--CoA ligase [ADP-forming] subunit beta (379 aa).

The 229-residue stretch at arginine 9 to arginine 237 folds into the ATP-grasp domain. Residues lysine 45, glycine 52 to glycine 54, isoleucine 94, and glutamate 99 contribute to the ATP site. Residues asparagine 192 and aspartate 206 each coordinate Mg(2+). Substrate-binding positions include asparagine 257 and glycine 314–threonine 316.

This sequence belongs to the succinate/malate CoA ligase beta subunit family. Heterotetramer of two alpha and two beta subunits. Mg(2+) is required as a cofactor.

It catalyses the reaction succinate + ATP + CoA = succinyl-CoA + ADP + phosphate. The enzyme catalyses GTP + succinate + CoA = succinyl-CoA + GDP + phosphate. The protein operates within carbohydrate metabolism; tricarboxylic acid cycle; succinate from succinyl-CoA (ligase route): step 1/1. Functionally, succinyl-CoA synthetase functions in the citric acid cycle (TCA), coupling the hydrolysis of succinyl-CoA to the synthesis of either ATP or GTP and thus represents the only step of substrate-level phosphorylation in the TCA. The beta subunit provides nucleotide specificity of the enzyme and binds the substrate succinate, while the binding sites for coenzyme A and phosphate are found in the alpha subunit. This is Succinate--CoA ligase [ADP-forming] subunit beta from Roseiflexus sp. (strain RS-1).